A 687-amino-acid chain; its full sequence is Dictomallein (687 aa).

2 disordered regions span residues 1–45 (MGNG…SRRL) and 73–112 (TAGG…STSA). Residues 233-501 (PVFGTDADVQ…QAWIASRVLA (269 aa)) enclose the Peptidase M66 domain. Residue His-393 coordinates Zn(2+). Glu-394 is an active-site residue. Positions 397 and 403 each coordinate Zn(2+).

This sequence belongs to the dictomallein family. Requires Zn(2+) as cofactor.

The sequence is that of Dictomallein (dtmL) from Burkholderia pseudomallei (strain 1710b).